Reading from the N-terminus, the 233-residue chain is MDAGDAWGRSSSSSSSAAAAARRLQARYDLYMGFDDADAAGVEEVEARGGGEAYNCPFCGEDFDFVAFCCHVDDEHAVEAKSGVCPICATRVGVDLIGHLTMQHGSYFKMQRRRRVRKISSGSHSLLSLLRKDLRDGSLQSFLGGSSYVSNPPAAAPDPFLSSLICSLPVAEPSKDLHSDSSDNNFLLNKFPDDKTAERAEPSLSEKDQKERAQRSKFVRGLVLSTIFEDDNL.

The disordered stretch occupies residues 176 to 215 (DLHSDSSDNNFLLNKFPDDKTAERAEPSLSEKDQKERAQR). Positions 191–214 (FPDDKTAERAEPSLSEKDQKERAQ) are enriched in basic and acidic residues.

This sequence belongs to the Di19 family.

The protein is Protein DEHYDRATION-INDUCED 19 homolog 2 (DI19-2) of Oryza sativa subsp. japonica (Rice).